Consider the following 152-residue polypeptide: ALK and LTK ligand 1 (152 aa).

A signal peptide spans 1–23 (MRAEKRWHILLSMILLLITSSQC). Disulfide bonds link cysteine 113-cysteine 149 and cysteine 127-cysteine 136.

The protein belongs to the ALKAL family. As to expression, expressed at low level in the notochord and iridophore stripes, the eye and the swim bladder.

The protein resides in the secreted. It localises to the cell membrane. In terms of biological role, cytokine that acts as a physiological ligand for receptor tyrosine kinases LTK and ALK. Required for iridophore development in the adult eye by acting as a receptor for LTK. This chain is ALK and LTK ligand 1, found in Danio rerio (Zebrafish).